Here is a 68-residue protein sequence, read N- to C-terminus: Protein transport protein Sec61 subunit gamma (68 aa).

Over M1–E32 the chain is Cytoplasmic. The chain crosses the membrane as a helical span at residues F33 to I61. Residues N62–G68 are Extracellular-facing.

Belongs to the SecE/SEC61-gamma family. As to quaternary structure, the SEC61 channel-forming translocon complex consists of channel-forming core components SEC61A1, SEC61B and SEC61G and different auxiliary components such as SEC62 and SEC63. The SEC61 channel associates with the multi-pass translocon (MPT) complex.

The protein localises to the endoplasmic reticulum membrane. Its function is as follows. Component of SEC61 channel-forming translocon complex that mediates transport of signal peptide-containing precursor polypeptides across the endoplasmic reticulum (ER). Forms a ribosome receptor and a gated pore in the ER membrane, both functions required for cotranslational translocation of nascent polypeptides. The SEC61 channel is also involved in ER membrane insertion of transmembrane proteins: it mediates membrane insertion of the first few transmembrane segments of proteins, while insertion of subsequent transmembrane regions of multi-pass membrane proteins is mediated by the multi-pass translocon (MPT) complex. The polypeptide is Protein transport protein Sec61 subunit gamma (sec61g) (Harpagifer antarcticus (Antarctic spiny plunderfish)).